The sequence spans 208 residues: MMPMDTVREYLLWNDFLRVCGIDEAGRGPLAGPVVAAAVVFPRWFSPDEGILRRLNDSKKLTPSLRRELAPAIREEAECWAVEAVDHETIDRINILRATMLAMNRAAESLPRQPDLLLIDGNRFTPNIPVPYQTIVGGDALVFSIAAASVLAKTERDRMMEEYAERYPEYGFERNAGYGTREHVEAIRRHGRSPIHRTSFRLRQLGEK.

Residues L17–K208 enclose the RNase H type-2 domain. 3 residues coordinate a divalent metal cation: D23, E24, and D120.

The protein belongs to the RNase HII family. Mn(2+) serves as cofactor. The cofactor is Mg(2+).

The protein localises to the cytoplasm. The catalysed reaction is Endonucleolytic cleavage to 5'-phosphomonoester.. Functionally, endonuclease that specifically degrades the RNA of RNA-DNA hybrids. This Chlorobium luteolum (strain DSM 273 / BCRC 81028 / 2530) (Pelodictyon luteolum) protein is Ribonuclease HII.